The chain runs to 429 residues: Asparagine--tRNA ligase (429 aa).

It belongs to the class-II aminoacyl-tRNA synthetase family. In terms of assembly, homodimer.

It is found in the cytoplasm. It carries out the reaction tRNA(Asn) + L-asparagine + ATP = L-asparaginyl-tRNA(Asn) + AMP + diphosphate + H(+). In Desulforamulus reducens (strain ATCC BAA-1160 / DSM 100696 / MI-1) (Desulfotomaculum reducens), this protein is Asparagine--tRNA ligase.